The sequence spans 565 residues: MPQASEHRLGRTREPPVNVQPRVGAKIPFPPRARSKERRNPVPGPNSMLRPLPPRPGPPDERLKKLDLGRGRTSGSRPRGPLRADHGVPLPGSPPPTVALPLPSRTNLTRSKSVSSGDLRPMGIALGGHRGTGELGAALSRLALRPEPPTLRRSTSLRRLGGFPGPPTLLSIRTEPPPSHGSFHMISARPSEPFYSDDKMAHHTLLLGSGHVGLRNLGNTCFLNAVLQCLSSTRPLRDFCLRRDFRQEVPGGGRAQELTEAFADVIGALWHPDSCEAVNPTRFRAVFQKYVPSFSGYSQQDAQEFLKLLMERLHLEINRRGRRAPPILASGPVPSPPRRGGALHEEPELSDDDRANLMWKRYLEREDSKIVDLFVGQLKSCLKCQACGYRSTTFEVFCDLSLPIPKKGFAGGKVSLRDCFSLFTKEEELESENAPVCDRCRQKTRSTKKLTVQRFPRILVLHLNRFSTSRGSIKKSSVGVDFPLQRLSLGDFASDKVGSPVYQLYALCNHSGSVHYGHYTALCRCQTGWHVYNDSRVSPVSENQVASSEGYVLFYQLMQEPPRCL.

2 stretches are compositionally biased toward basic and acidic residues: residues 1 to 14 (MPQASEHRLGRTRE) and 58 to 70 (PPDERLKKLDLGR). Residues 1 to 128 (MPQASEHRLG…LRPMGIALGG (128 aa)) are disordered. Low complexity predominate over residues 71 to 81 (GRTSGSRPRGP). Polar residues predominate over residues 104–116 (SRTNLTRSKSVSS). Positions 134–152 (ELGAALSRLALRPEPPTLR) match the Nuclear export signal motif. Positions 212–558 (VGLRNLGNTC…EGYVLFYQLM (347 aa)) constitute a USP domain. The active-site Nucleophile is Cys-221. The interval 324–347 (APPILASGPVPSPPRRGGALHEEP) is disordered. Zn(2+)-binding residues include Cys-384, Cys-387, Cys-437, and Cys-440. His-518 serves as the catalytic Proton acceptor.

Belongs to the peptidase C19 family. USP21 subfamily. Interacts with BEND3.

It localises to the cytoplasm. It is found in the nucleus. It catalyses the reaction Thiol-dependent hydrolysis of ester, thioester, amide, peptide and isopeptide bonds formed by the C-terminal Gly of ubiquitin (a 76-residue protein attached to proteins as an intracellular targeting signal).. Deubiquitinates histone H2A, a specific tag for epigenetic transcriptional repression, thereby acting as a coactivator. Deubiquitination of histone H2A releaves the repression of di- and trimethylation of histone H3 at 'Lys-4', resulting in regulation of transcriptional initiation. Regulates gene expression via histone H2A deubiquitination. Deubiquitinates BAZ2A/TIP5 leading to its stabilization. Also capable of removing NEDD8 from NEDD8 conjugates but has no effect on Sentrin-1 conjugates. Also acts as a negative regulator of the ribosome quality control (RQC) by mediating deubiquitination of 40S ribosomal proteins RPS10/eS10 and RPS20/uS10, thereby antagonizing ZNF598-mediated 40S ubiquitination. This is Ubiquitin carboxyl-terminal hydrolase 21 (Usp21) from Rattus norvegicus (Rat).